Reading from the N-terminus, the 574-residue chain is Sulfate adenylyltransferase (574 aa).

Residues Met1–Tyr170 form an N-terminal region. Residues Asp171 to Glu395 form a catalytic region. Gln198 serves as a coordination point for sulfate. ATP contacts are provided by residues Gln198–Asn201 and Gly292–His295. Catalysis depends on residues Thr199, Arg200, and Asn201. Arg200 serves as a coordination point for sulfate. Ala296 provides a ligand contact to sulfate. Met334 contributes to the ATP binding site. The interval Lys396–Leu574 is allosteric regulation domain; adenylyl-sulfate kinase-like. 3'-phosphoadenylyl sulfate is bound by residues Glu435 to Arg438, Arg452, Ile478 to Ala479, and Lys516.

The protein in the N-terminal section; belongs to the sulfate adenylyltransferase family. This sequence in the C-terminal section; belongs to the APS kinase family. Homohexamer. Dimer of trimers.

Its subcellular location is the cytoplasm. It catalyses the reaction sulfate + ATP + H(+) = adenosine 5'-phosphosulfate + diphosphate. It participates in sulfur metabolism; hydrogen sulfide biosynthesis; sulfite from sulfate: step 1/3. Allosterically inhibited by 3'-phosphoadenosine 5'-phosphosulfate (PAPS). Catalyzes the first intracellular reaction of sulfate assimilation, forming adenosine-5'-phosphosulfate (APS) from inorganic sulfate and ATP. Plays an important role in sulfate activation as a component of the biosynthesis pathway of sulfur-containing amino acids. The chain is Sulfate adenylyltransferase from Gibberella zeae (strain ATCC MYA-4620 / CBS 123657 / FGSC 9075 / NRRL 31084 / PH-1) (Wheat head blight fungus).